Consider the following 252-residue polypeptide: Thiamine thiazole synthase (252 aa).

NAD(+) is bound by residues serine 35, glutamate 54 to lysine 55, glycine 62, valine 126, and histidine 152 to aspartate 154. Positions 154 and 169 each coordinate Fe cation. Residue methionine 217 participates in NAD(+) binding. Residue arginine 227 participates in glycine binding.

This sequence belongs to the THI4 family. In terms of assembly, homooctamer; tetramer of dimers. The cofactor is Fe(2+).

The catalysed reaction is hydrogen sulfide + glycine + NAD(+) = ADP-5-ethyl-4-methylthiazole-2-carboxylate + nicotinamide + 3 H2O + H(+). It participates in cofactor biosynthesis; thiamine diphosphate biosynthesis. In terms of biological role, involved in the biosynthesis of the thiazole moiety of thiamine. Catalyzes the conversion of NAD and glycine to adenosine diphosphate 5-(2-hydroxyethyl)-4-methylthiazole-2-carboxylate (ADT), an adenylated thiazole intermediate, using free sulfide as a source of sulfur. In Pyrococcus abyssi (strain GE5 / Orsay), this protein is Thiamine thiazole synthase.